Here is a 435-residue protein sequence, read N- to C-terminus: GTPase Der (435 aa).

EngA-type G domains lie at 4 to 167 (PTLA…PSED) and 175 to 350 (IKFS…ENQT). GTP-binding positions include 10 to 17 (GRPNVGKS), 57 to 61 (DTGGI), 119 to 122 (NKVD), 181 to 188 (GRPNVGKS), 228 to 232 (DTAGI), and 293 to 296 (NKWD). The KH-like domain maps to 351–435 (RRIQSSVLND…PIHIIARKRK (85 aa)).

The protein belongs to the TRAFAC class TrmE-Era-EngA-EngB-Septin-like GTPase superfamily. EngA (Der) GTPase family. Associates with the 50S ribosomal subunit.

GTPase that plays an essential role in the late steps of ribosome biogenesis. This Lacticaseibacillus casei (strain BL23) (Lactobacillus casei) protein is GTPase Der.